A 234-amino-acid chain; its full sequence is Large ribosomal subunit protein uL1 (234 aa).

The protein belongs to the universal ribosomal protein uL1 family. Part of the 50S ribosomal subunit.

Its function is as follows. Binds directly to 23S rRNA. The L1 stalk is quite mobile in the ribosome, and is involved in E site tRNA release. In terms of biological role, protein L1 is also a translational repressor protein, it controls the translation of the L11 operon by binding to its mRNA. This is Large ribosomal subunit protein uL1 from Salmonella gallinarum (strain 287/91 / NCTC 13346).